Reading from the N-terminus, the 143-residue chain is S-adenosylmethionine decarboxylase proenzyme (143 aa).

Serine 66 acts as the Schiff-base intermediate with substrate; via pyruvic acid in catalysis. The residue at position 66 (serine 66) is a Pyruvic acid (Ser); by autocatalysis. The Proton acceptor; for processing activity role is filled by histidine 71. The active-site Proton donor; for catalytic activity is cysteine 86.

This sequence belongs to the prokaryotic AdoMetDC family. Type 1 subfamily. Heterotetramer of two alpha and two beta chains arranged as a dimer of alpha/beta heterodimers. Pyruvate is required as a cofactor. Is synthesized initially as an inactive proenzyme. Formation of the active enzyme involves a self-maturation process in which the active site pyruvoyl group is generated from an internal serine residue via an autocatalytic post-translational modification. Two non-identical subunits are generated from the proenzyme in this reaction, and the pyruvate is formed at the N-terminus of the alpha chain, which is derived from the carboxyl end of the proenzyme. The post-translation cleavage follows an unusual pathway, termed non-hydrolytic serinolysis, in which the side chain hydroxyl group of the serine supplies its oxygen atom to form the C-terminus of the beta chain, while the remainder of the serine residue undergoes an oxidative deamination to produce ammonia and the pyruvoyl group blocking the N-terminus of the alpha chain.

It carries out the reaction S-adenosyl-L-methionine + H(+) = S-adenosyl 3-(methylsulfanyl)propylamine + CO2. The protein operates within amine and polyamine biosynthesis; S-adenosylmethioninamine biosynthesis; S-adenosylmethioninamine from S-adenosyl-L-methionine: step 1/1. In terms of biological role, catalyzes the decarboxylation of S-adenosylmethionine to S-adenosylmethioninamine (dcAdoMet), the propylamine donor required for the synthesis of the polyamines spermine and spermidine from the diamine putrescine. This Thermococcus gammatolerans (strain DSM 15229 / JCM 11827 / EJ3) protein is S-adenosylmethionine decarboxylase proenzyme.